The chain runs to 323 residues: Delta-aminolevulinic acid dehydratase (323 aa).

Residues C118, C120, and C128 each coordinate Zn(2+). The active-site Schiff-base intermediate with substrate is K195. Positions 205 and 217 each coordinate 5-aminolevulinate. E233 provides a ligand contact to Mg(2+). The Schiff-base intermediate with substrate role is filled by K248. The 5-aminolevulinate site is built by S274 and Y313.

Belongs to the ALAD family. As to quaternary structure, homooctamer. The cofactor is Zn(2+).

It catalyses the reaction 2 5-aminolevulinate = porphobilinogen + 2 H2O + H(+). It functions in the pathway porphyrin-containing compound metabolism; protoporphyrin-IX biosynthesis; coproporphyrinogen-III from 5-aminolevulinate: step 1/4. Catalyzes an early step in the biosynthesis of tetrapyrroles. Binds two molecules of 5-aminolevulinate per subunit, each at a distinct site, and catalyzes their condensation to form porphobilinogen. This Staphylococcus aureus protein is Delta-aminolevulinic acid dehydratase (hemB).